Reading from the N-terminus, the 442-residue chain is MTPYSSAADLGSTVSPLEGLSSVITKNTSIVSQYLQANNLPQPSPEANGPVVVLPSDAPQDVQQARQQLIAASLEIFQLAIGPSEFLPHLATNFQYISCLTWLAHYDIFHLVPRDKNISYADLARATGVPEQRLKSILRMAMTSSLFREHPNGTDVGHSAVSALLASDDDAYSYATYMCSKTAPMAMSMTEAHKRWGASTRTNETAYNVAFNTELPLFDDLAQNKARMGEFARYMRSVRSSETVALKHLVSGVDWESIPAGGMLVDVGGSTGGAAIALAQAYPHIRFTIQDLPENVETGEKAAAASLPADIASRLTFQAHDFTLPQPVRAADAYLLRMILHDWPDEQAVKILRNIVTAMEETKSRLFIMDTVLPKPGSVPVSVERIARARDLTMIQSFNSKERELDEWKELITAADPRLQLIAVTQPLGSAMSILEIQLSAK.

Residue Asp-291 coordinates S-adenosyl-L-methionine. His-341 functions as the Proton acceptor in the catalytic mechanism.

Belongs to the class I-like SAM-binding methyltransferase superfamily. Cation-independent O-methyltransferase family.

Its pathway is pigment biosynthesis. It functions in the pathway secondary metabolite biosynthesis. O-methyltransferase; part of the gene cluster that mediates the biosynthesis of pleosporalin A, ascomycone A, as well as a third cryptic naphthoquinone derived pigment, all responsible for the coloration of conidia. Specifically methylates position C-6 of the pgmA product 3-acetonyl-1,6,8-trihydroxy-2-naphthaldehyde to yield fusarubinaldehyde. The pathway begins with the biosynthesis of the cyclized heptaketide 3-acetonyl-1,6,8-trihydroxy-2-naphthaldehyde by the NR-PKS pgmA. The C-6 hydroxyl group is further methylated by the O-methyltransferase pgmB to yield fusarubinaldehyde which is in turn oxidized by the cytochrome P450 monooxygenase pgmC at C-9. The C-1 hydroxyl group is then methylated spontaneously. Although pgmE, pgmD and pgmH are essential for the production of pleosporalin A, it is not the case for the 2 other final products and it remains difficult to assign a specific function to each enzyme. PgmF and pgmG seem not to be involved in pigment biosynthesis although they were regulated by the cluster-specific transcription factor pgmR. This Aspergillus terreus protein is O-methyltransferase pgmB.